A 344-amino-acid polypeptide reads, in one-letter code: L-rhamnose-proton symporter (344 aa).

10 consecutive transmembrane segments (helical) span residues 4-24, 38-58, 68-88, 101-121, 137-157, 175-195, 214-234, 259-279, 290-310, and 323-343; these read AITM…CFYA, WSVG…ALLL, FSLS…IGNI, MGIG…TPII, TLLG…AGQL, LVLA…MNAA, LPSY…FCFI, VLLS…YAWG, ISWM…GLVL, and VLSL…IGMA.

This sequence belongs to the L-rhamnose transporter (TC 2.A.7.6) family.

The protein localises to the cell inner membrane. It carries out the reaction L-rhamnopyranose(in) + H(+)(in) = L-rhamnopyranose(out) + H(+)(out). In terms of biological role, uptake of L-rhamnose across the cytoplasmic membrane with the concomitant transport of protons into the cell (symport system). The protein is L-rhamnose-proton symporter of Escherichia coli (strain ATCC 8739 / DSM 1576 / NBRC 3972 / NCIMB 8545 / WDCM 00012 / Crooks).